A 761-amino-acid chain; its full sequence is Zinc finger protein 711 (761 aa).

Residues Lys-224, Lys-235, and Lys-296 each participate in a glycyl lysine isopeptide (Lys-Gly) (interchain with G-Cter in SUMO2) cross-link. C2H2-type zinc fingers lie at residues 383-408, 414-436, 476-499, 505-527, and 533-556; these read YPCHICTKKFKSRGFLKRHMKNHPDH, YQCTDCDFTTNKKVSFHNHLESH, HKCKYCDYETAEQGLLNRHLLAVH, HVCVECGKGFRHPSELKKHMRTH, and YQCQYCIFRCADQSNLKTHIKSKH. The segment at 515–761 is required for transcriptional activation; sequence RHPSELKKHM…IMRHHKEALM (247 aa). The C2H2-type 6; atypical zinc finger occupies 562–584; that stretch reads YKCEHCPQAFGDERELQRHLDLF. Residues Cys-564, Cys-567, and His-580 each coordinate Zn(2+). 6 consecutive C2H2-type zinc fingers follow at residues 590 to 613, 619 to 641, 647 to 670, 676 to 698, 704 to 727, and 733 to 755; these read HQCPHCDHKSTNSSDLKRHIISVH, HKCEVCDKGFHRPSELKKHSDIH, HQCRHCDFKTSDPFILSGHILSVH, LKCKRCKRGFRQQNELKKHMKTH, YQCEYCEYSTTDASGFKRHVISIH, and HRCEFCKKGFRRPSEKNQHIMRH.

The protein belongs to the krueppel C2H2-type zinc-finger protein family. As to quaternary structure, interacts with PHF8. As to expression, expressed in neural tissues.

The protein resides in the nucleus. Transcription regulator required for brain development. Probably acts as a transcription factor that binds to the promoter of target genes and recruits PHF8 histone demethylase, leading to activated expression of genes involved in neuron development, such as KDM5C. May compete with transcription factor ARX for activation of expression of KDM5C. The polypeptide is Zinc finger protein 711 (ZNF711) (Homo sapiens (Human)).